Reading from the N-terminus, the 120-residue chain is Small ribosomal subunit protein uS13 (120 aa).

Residues 92-120 (HRKGLPVRGQTTKNNARTRKGKKKTVGSK) form a disordered region. Residues 107–120 (ARTRKGKKKTVGSK) are compositionally biased toward basic residues.

Belongs to the universal ribosomal protein uS13 family. In terms of assembly, part of the 30S ribosomal subunit. Forms a loose heterodimer with protein S19. Forms two bridges to the 50S subunit in the 70S ribosome.

Functionally, located at the top of the head of the 30S subunit, it contacts several helices of the 16S rRNA. In the 70S ribosome it contacts the 23S rRNA (bridge B1a) and protein L5 of the 50S subunit (bridge B1b), connecting the 2 subunits; these bridges are implicated in subunit movement. Contacts the tRNAs in the A and P-sites. This is Small ribosomal subunit protein uS13 from Helicobacter hepaticus (strain ATCC 51449 / 3B1).